The primary structure comprises 545 residues: POTE ankyrin domain family member H (545 aa).

ANK repeat units lie at residues 180–208 (LHRAAWWGKVPRKDLIVMLKDTDMNKKDK), 209–238 (QKRTALHLASANGNSEVVKLLLDRRCQLNI), 242–271 (KKRTALTKAVQCQEDECALMLLEHGTDPNI), 275–304 (YGNTALHYAIYNEDKLMAKALLLYGADIES), 308–337 (HGLTPLLLGVHEQKQQVVKFLIKKKANLNA), 341–370 (YGRTALILAVCCGSASIVSLLLEQNIDVSS), and 374–404 (SGQTAREYAVSSRHNVICQLLSDYKEKQILK). Positions 406-524 (SSENSNPEQD…KQLSEEQNTG (119 aa)) are disordered. 2 stretches are compositionally biased toward basic and acidic residues: residues 414 to 429 (QDLKLTSEEESQRLKG) and 443 to 458 (EINKGGDRKVEEEMKK). A compositionally biased stretch (polar residues) spans 513–524 (TQKQLSEEQNTG).

Belongs to the POTE family.

The sequence is that of POTE ankyrin domain family member H (POTEH) from Homo sapiens (Human).